Reading from the N-terminus, the 215-residue chain is 3-demethoxyubiquinol 3-hydroxylase (215 aa).

Fe cation is bound by residues Glu-64, Glu-94, His-97, Glu-146, Glu-178, and His-181.

This sequence belongs to the COQ7 family. Requires Fe cation as cofactor.

It localises to the cell membrane. It carries out the reaction a 5-methoxy-2-methyl-3-(all-trans-polyprenyl)benzene-1,4-diol + AH2 + O2 = a 3-demethylubiquinol + A + H2O. Its pathway is cofactor biosynthesis; ubiquinone biosynthesis. Its function is as follows. Catalyzes the hydroxylation of 2-nonaprenyl-3-methyl-6-methoxy-1,4-benzoquinol during ubiquinone biosynthesis. The protein is 3-demethoxyubiquinol 3-hydroxylase of Bordetella avium (strain 197N).